A 396-amino-acid chain; its full sequence is Elongation factor Tu (396 aa).

Positions 10–206 (KPHVNVGTIG…ALDSYIPEPT (197 aa)) constitute a tr-type G domain. The G1 stretch occupies residues 19-26 (GHVDHGKT). Position 19 to 26 (19 to 26 (GHVDHGKT)) interacts with GTP. Position 26 (Thr26) interacts with Mg(2+). Residues 60 to 64 (GITIS) form a G2 region. The interval 81 to 84 (DCPG) is G3. GTP-binding positions include 81–85 (DCPGH) and 136–139 (NKAD). Positions 136–139 (NKAD) are G4. A G5 region spans residues 174 to 176 (SAL).

The protein belongs to the TRAFAC class translation factor GTPase superfamily. Classic translation factor GTPase family. EF-Tu/EF-1A subfamily. In terms of assembly, monomer.

Its subcellular location is the cytoplasm. It catalyses the reaction GTP + H2O = GDP + phosphate + H(+). Its function is as follows. GTP hydrolase that promotes the GTP-dependent binding of aminoacyl-tRNA to the A-site of ribosomes during protein biosynthesis. The protein is Elongation factor Tu of Hydrogenovibrio crunogenus (strain DSM 25203 / XCL-2) (Thiomicrospira crunogena).